Here is a 184-residue protein sequence, read N- to C-terminus: ATP synthase subunit b, chloroplastic (184 aa).

The helical transmembrane segment at Leu27–Leu49 threads the bilayer.

The protein belongs to the ATPase B chain family. As to quaternary structure, F-type ATPases have 2 components, F(1) - the catalytic core - and F(0) - the membrane proton channel. F(1) has five subunits: alpha(3), beta(3), gamma(1), delta(1), epsilon(1). F(0) has four main subunits: a(1), b(1), b'(1) and c(10-14). The alpha and beta chains form an alternating ring which encloses part of the gamma chain. F(1) is attached to F(0) by a central stalk formed by the gamma and epsilon chains, while a peripheral stalk is formed by the delta, b and b' chains.

Its subcellular location is the plastid. It localises to the chloroplast thylakoid membrane. Functionally, f(1)F(0) ATP synthase produces ATP from ADP in the presence of a proton or sodium gradient. F-type ATPases consist of two structural domains, F(1) containing the extramembraneous catalytic core and F(0) containing the membrane proton channel, linked together by a central stalk and a peripheral stalk. During catalysis, ATP synthesis in the catalytic domain of F(1) is coupled via a rotary mechanism of the central stalk subunits to proton translocation. Component of the F(0) channel, it forms part of the peripheral stalk, linking F(1) to F(0). This chain is ATP synthase subunit b, chloroplastic, found in Arabis hirsuta (Hairy rock-cress).